The sequence spans 363 residues: Fructose-1,6-bisphosphate aldolase/phosphatase (363 aa).

Asp-11 serves as the catalytic Proton acceptor; for FBP phosphatase activity. Mg(2+) is bound by residues Asp-11, His-18, Asp-51, and Asp-52. His-18 contacts beta-D-fructose 1,6-bisphosphate. His-18 is a dihydroxyacetone phosphate binding site. Tyr-89 serves as a coordination point for beta-D-fructose 1,6-bisphosphate. Gln-93 contributes to the Mg(2+) binding site. 102–103 (GN) is a beta-D-fructose 1,6-bisphosphate binding site. Residue Asp-130 participates in Mg(2+) binding. Beta-D-fructose 1,6-bisphosphate is bound at residue Lys-131. Lys-131 is a binding site for dihydroxyacetone phosphate. Tyr-230 serves as the catalytic Proton donor/acceptor; for FBP aldolase activity. Residues Lys-233, Asp-234, and Asp-235 each contribute to the Mg(2+) site. Residue Lys-233 is the Schiff-base intermediate with DHAP; for FBP aldolase activity of the active site. Beta-D-fructose 1,6-bisphosphate contacts are provided by residues 243-244 (QK), Arg-267, and Tyr-348. Arg-267 serves as a coordination point for dihydroxyacetone phosphate.

Belongs to the FBP aldolase/phosphatase family. In terms of assembly, homooctamer; dimer of tetramers. Mg(2+) serves as cofactor.

The enzyme catalyses beta-D-fructose 1,6-bisphosphate + H2O = beta-D-fructose 6-phosphate + phosphate. The catalysed reaction is beta-D-fructose 1,6-bisphosphate = D-glyceraldehyde 3-phosphate + dihydroxyacetone phosphate. It functions in the pathway carbohydrate biosynthesis; gluconeogenesis. Catalyzes two subsequent steps in gluconeogenesis: the aldol condensation of dihydroxyacetone phosphate (DHAP) and glyceraldehyde-3-phosphate (GA3P) to fructose-1,6-bisphosphate (FBP), and the dephosphorylation of FBP to fructose-6-phosphate (F6P). The sequence is that of Fructose-1,6-bisphosphate aldolase/phosphatase from Thermus thermophilus (strain ATCC BAA-163 / DSM 7039 / HB27).